Here is a 318-residue protein sequence, read N- to C-terminus: tRNA-cytidine(32) 2-sulfurtransferase (318 aa).

The PP-loop motif motif lies at 65 to 70; that stretch reads SGGKDS. 3 residues coordinate [4Fe-4S] cluster: Cys140, Cys143, and Cys231.

This sequence belongs to the TtcA family. As to quaternary structure, homodimer. It depends on Mg(2+) as a cofactor. The cofactor is [4Fe-4S] cluster.

Its subcellular location is the cytoplasm. The catalysed reaction is cytidine(32) in tRNA + S-sulfanyl-L-cysteinyl-[cysteine desulfurase] + AH2 + ATP = 2-thiocytidine(32) in tRNA + L-cysteinyl-[cysteine desulfurase] + A + AMP + diphosphate + H(+). The protein operates within tRNA modification. In terms of biological role, catalyzes the ATP-dependent 2-thiolation of cytidine in position 32 of tRNA, to form 2-thiocytidine (s(2)C32). The sulfur atoms are provided by the cysteine/cysteine desulfurase (IscS) system. The chain is tRNA-cytidine(32) 2-sulfurtransferase from Herminiimonas arsenicoxydans.